The primary structure comprises 97 residues: YcgL domain-containing protein PSEEN4034 (97 aa).

The YcgL domain maps to 3–87 (RICSIYKSPR…PDDDYIEHLP (85 aa)).

The polypeptide is YcgL domain-containing protein PSEEN4034 (Pseudomonas entomophila (strain L48)).